The chain runs to 466 residues: RUS family member 1 (466 aa).

Residue A2 is modified to N-acetylalanine. Residues 245-265 (LLMLPLVSDCLSLSLGCFILL) traverse the membrane as a helical segment.

Belongs to the RUS1 family.

The protein localises to the membrane. In Rattus norvegicus (Rat), this protein is RUS family member 1 (Rusf1).